The chain runs to 347 residues: Heat-inducible transcription repressor HrcA (347 aa).

This sequence belongs to the HrcA family.

Its function is as follows. Negative regulator of class I heat shock genes (grpE-dnaK-dnaJ and groELS operons). Prevents heat-shock induction of these operons. The polypeptide is Heat-inducible transcription repressor HrcA (Mycobacterium sp. (strain JLS)).